The primary structure comprises 489 residues: ERO1-like protein alpha (489 aa).

The signal sequence occupies residues 1 to 20 (METCVLLLGLFLTSVHVTTA). Intrachain disulfides connect cysteine 27–cysteine 40, cysteine 29–cysteine 38, cysteine 77–cysteine 382, cysteine 86–cysteine 91, cysteine 86–cysteine 123, cysteine 91–cysteine 96, cysteine 200–cysteine 232, and cysteine 385–cysteine 388. Residues arginine 179, threonine 181, and tryptophan 192 each contribute to the FAD site. Residues serine 243 and histidine 246 each contribute to the FAD site. N-linked (GlcNAc...) asparagine glycosylation is present at asparagine 271. FAD-binding residues include arginine 278 and arginine 291. N-linked (GlcNAc...) asparagine glycosylation is present at asparagine 375.

This sequence belongs to the EROs family. Predominantly monomer. May function both as a monomer and a homodimer. FAD is required as a cofactor. The Cys-86/Cys-91 and Cys-385/Cys-388 disulfide bonds constitute the redox-active center. The Cys-86/Cys-91 disulfide bond may accept electron from protein disulfide isomerase (PDI) and funnel them to the active site disulfide Cys-385/Cys-388.

It is found in the endoplasmic reticulum membrane. With respect to regulation, enzyme activity is tightly regulated to prevent the accumulation of reactive oxygen species in the endoplasmic reticulum. Reversibly down-regulated by the formation of disulfide bonds between the active site Cys-86 and Cys-123, and between Cys-91 and Cys-96. Glutathione may be required to regulate its activity in the endoplasmic reticulum. In terms of biological role, oxidoreductase involved in disulfide bond formation in the endoplasmic reticulum. Efficiently reoxidizes P4HB/PDI, the enzyme catalyzing protein disulfide formation, in order to allow P4HB to sustain additional rounds of disulfide formation. Following P4HB reoxidation, passes its electrons to molecular oxygen via FAD, leading to the production of reactive oxygen species (ROS) in the cell. Required for the folding of immunoglobulins. The chain is ERO1-like protein alpha from Danio rerio (Zebrafish).